Consider the following 255-residue polypeptide: Triosephosphate isomerase (255 aa).

9–11 lines the substrate pocket; the sequence is NWK. H95 serves as the catalytic Electrophile. The active-site Proton acceptor is the E167. Substrate is bound by residues G173, S212, and 233–234; that span reads GG.

Belongs to the triosephosphate isomerase family. In terms of assembly, homodimer.

Its subcellular location is the cytoplasm. The catalysed reaction is D-glyceraldehyde 3-phosphate = dihydroxyacetone phosphate. The protein operates within carbohydrate biosynthesis; gluconeogenesis. Its pathway is carbohydrate degradation; glycolysis; D-glyceraldehyde 3-phosphate from glycerone phosphate: step 1/1. Functionally, involved in the gluconeogenesis. Catalyzes stereospecifically the conversion of dihydroxyacetone phosphate (DHAP) to D-glyceraldehyde-3-phosphate (G3P). This Salmonella agona (strain SL483) protein is Triosephosphate isomerase.